The sequence spans 207 residues: Pyridoxine/pyridoxamine 5'-phosphate oxidase (207 aa).

FMN-binding positions include 53 to 58 (RMVLLK), 68 to 69 (YT), Lys-75, and Gln-97. Lys-58 provides a ligand contact to substrate. 3 residues coordinate substrate: Tyr-115, Arg-119, and Ser-123. FMN is bound by residues 132–133 (QS) and Trp-177. 183–185 (RLH) contacts substrate. Arg-187 lines the FMN pocket.

This sequence belongs to the pyridoxamine 5'-phosphate oxidase family. As to quaternary structure, homodimer. It depends on FMN as a cofactor.

It carries out the reaction pyridoxamine 5'-phosphate + O2 + H2O = pyridoxal 5'-phosphate + H2O2 + NH4(+). The enzyme catalyses pyridoxine 5'-phosphate + O2 = pyridoxal 5'-phosphate + H2O2. Its pathway is cofactor metabolism; pyridoxal 5'-phosphate salvage; pyridoxal 5'-phosphate from pyridoxamine 5'-phosphate: step 1/1. It functions in the pathway cofactor metabolism; pyridoxal 5'-phosphate salvage; pyridoxal 5'-phosphate from pyridoxine 5'-phosphate: step 1/1. Catalyzes the oxidation of either pyridoxine 5'-phosphate (PNP) or pyridoxamine 5'-phosphate (PMP) into pyridoxal 5'-phosphate (PLP). The chain is Pyridoxine/pyridoxamine 5'-phosphate oxidase from Bartonella henselae (strain ATCC 49882 / DSM 28221 / CCUG 30454 / Houston 1) (Rochalimaea henselae).